Consider the following 760-residue polypeptide: Formate acetyltransferase 1 (760 aa).

Residues 3 to 625 (ELNEKLATAW…KTGNTPDGRR (623 aa)) enclose the PFL domain. Lysine 63 carries the N6-acetyllysine; alternate modification. An N6-succinyllysine; alternate modification is found at lysine 63. Lysine 107 bears the N6-succinyllysine mark. N6-acetyllysine; alternate is present on lysine 117. Lysine 117 carries the N6-succinyllysine; alternate modification. Lysine 124 carries the N6-succinyllysine modification. At lysine 195 the chain carries N6-acetyllysine; alternate. Lysine 195 bears the N6-succinyllysine; alternate mark. The active-site S-acetylcysteine intermediate is the cysteine 419. The Cysteine radical intermediate role is filled by cysteine 420. The residue at position 454 (lysine 454) is an N6-acetyllysine; alternate. Lysine 454 is modified (N6-succinyllysine; alternate). An N6-succinyllysine modification is found at lysine 467. N6-acetyllysine occurs at positions 541 and 591. The 129-residue stretch at 632-760 (PGANPMHGRD…VITRTFTQSM (129 aa)) folds into the Glycine radical domain. Lysine 654 carries the post-translational modification N6-succinyllysine. Glycine 735 carries the glycine radical modification.

It belongs to the glycyl radical enzyme (GRE) family. PFL subfamily. Homodimer. Interacts specifically with FocA.

It localises to the cytoplasm. It carries out the reaction formate + acetyl-CoA = pyruvate + CoA. The protein operates within fermentation; pyruvate fermentation; formate from pyruvate: step 1/1. In terms of biological role, catalyzes the conversion of pyruvate to formate and acetyl-CoA. In addition, may be involved in the control of the activity of the formate channel FocA, via direct interaction with FocA. The chain is Formate acetyltransferase 1 (pflB) from Escherichia coli (strain K12).